Reading from the N-terminus, the 293-residue chain is Proteinase T (293 aa).

The propeptide occupies glutamate 1–serine 12. The Peptidase S8 domain maps to proline 19–alanine 293. Cystine bridges form between cysteine 46/cysteine 137 and cysteine 192/cysteine 262. Catalysis depends on charge relay system residues aspartate 51, histidine 83, and serine 238.

The protein belongs to the peptidase S8 family.

Serine proteinase. This Parengyodontium album (Tritirachium album) protein is Proteinase T (PROT).